A 293-amino-acid polypeptide reads, in one-letter code: ATP synthase subunit a (293 aa).

The next 6 helical transmembrane spans lie at 40-60 (DSLFWSILMGLLVVFCLWLAA), 97-117 (LFVAPLALTVFLWIILMNALD), 151-171 (DLNVPMGMSLGVLLLMFYYGI), 188-208 (FHAHGLASLVLAPFNLLLNLI), 225-245 (MFAGELIFMLIALLGGAWTGF), and 264-284 (AIFHILIVLLQAFIFMMLTLV).

The protein belongs to the ATPase A chain family. As to quaternary structure, F-type ATPases have 2 components, CF(1) - the catalytic core - and CF(0) - the membrane proton channel. CF(1) has five subunits: alpha(3), beta(3), gamma(1), delta(1), epsilon(1). CF(0) has three main subunits: a(1), b(2) and c(9-12). The alpha and beta chains form an alternating ring which encloses part of the gamma chain. CF(1) is attached to CF(0) by a central stalk formed by the gamma and epsilon chains, while a peripheral stalk is formed by the delta and b chains.

It localises to the cell inner membrane. Functionally, key component of the proton channel; it plays a direct role in the translocation of protons across the membrane. In Bordetella bronchiseptica (strain ATCC BAA-588 / NCTC 13252 / RB50) (Alcaligenes bronchisepticus), this protein is ATP synthase subunit a.